The primary structure comprises 191 residues: Elongation factor P-like protein (191 aa).

It belongs to the elongation factor P family.

This is Elongation factor P-like protein from Shewanella sediminis (strain HAW-EB3).